Reading from the N-terminus, the 882-residue chain is Translation initiation factor IF-2 (882 aa).

A disordered region spans residues 50-299 (SFKSANTTKP…KERPLPETLV (250 aa)). 2 stretches are compositionally biased toward basic and acidic residues: residues 60–71 (STEKDSKNSSRK) and 84–96 (RRRD…DNRH). Positions 97-108 (GNNKRRNNKFKK) are enriched in basic residues. Basic and acidic residues-rich tracts occupy residues 109–133 (QQND…DLLN), 169–183 (KKVE…EKLE), 232–242 (QKEETKPTRKK), and 250–263 (EVPD…EHSD). The segment covering 264–277 (KARRRRNKKNKRIN) has biased composition (basic residues). Basic and acidic residues predominate over residues 278 to 294 (QSKEIKKQPTQRKERPL). The 170-residue stretch at 383 to 552 (KRPPVVTIMG…LLQADVMELK (170 aa)) folds into the tr-type G domain. The tract at residues 392–399 (GHVDHGKT) is G1. 392-399 (GHVDHGKT) contributes to the GTP binding site. The segment at 417–421 (GITQK) is G2. The segment at 438-441 (DTPG) is G3. GTP-binding positions include 438–442 (DTPGH) and 492–495 (NKID). Residues 492 to 495 (NKID) form a G4 region. A G5 region spans residues 528–530 (SAK).

It belongs to the TRAFAC class translation factor GTPase superfamily. Classic translation factor GTPase family. IF-2 subfamily.

It localises to the cytoplasm. In terms of biological role, one of the essential components for the initiation of protein synthesis. Protects formylmethionyl-tRNA from spontaneous hydrolysis and promotes its binding to the 30S ribosomal subunits. Also involved in the hydrolysis of GTP during the formation of the 70S ribosomal complex. The chain is Translation initiation factor IF-2 from Lactobacillus gasseri (strain ATCC 33323 / DSM 20243 / BCRC 14619 / CIP 102991 / JCM 1131 / KCTC 3163 / NCIMB 11718 / NCTC 13722 / AM63).